A 302-amino-acid polypeptide reads, in one-letter code: Rhomboid-related protein 2 (302 aa).

The tract at residues 1–38 is disordered; sequence MAVAHEMEMESVNLNMEREGKEEPEEEKMKGNGEGKDF. A compositionally biased stretch (basic and acidic residues) spans 16–38; the sequence is MEREGKEEPEEEKMKGNGEGKDF. 7 consecutive transmembrane segments (helical) span residues 71–91, 127–147, 158–178, 182–202, 211–231, 244–264, and 277–297; these read PLFIILISLAELAVFIYYAVW, LVHAGVQHIVGNLLMQIVLGI, VGLVYLAGVLAGSLASSIFDP, LVGASGGVYALMGGYFMNVIV, FGIVRLLVIILIVASDMGFAL, VSFAAHIAGGFAGMSIGYTVF, and FWIAIAAYVACLLFAVFFNIF. Serine 186 acts as the Nucleophile in catalysis. The active site involves histidine 249.

This sequence belongs to the peptidase S54 family. Post-translationally, proteolytic processing of the proenzyme produces an N- and a C-terminal fragment. The processing is required for activation of the protease.

The protein resides in the cell membrane. The enzyme catalyses Cleaves type-1 transmembrane domains using a catalytic dyad composed of serine and histidine that are contributed by different transmembrane domains.. Functionally, involved in regulated intramembrane proteolysis and the subsequent release of functional polypeptides from their membrane anchors. Known substrate: EFNB3. This chain is Rhomboid-related protein 2 (Rhbdl2), found in Mus musculus (Mouse).